A 391-amino-acid chain; its full sequence is Pyridinium-3,5-bisthiocarboxylic acid mononucleotide nickel insertion protein (391 aa).

Belongs to the LarC family.

It carries out the reaction Ni(II)-pyridinium-3,5-bisthiocarboxylate mononucleotide = pyridinium-3,5-bisthiocarboxylate mononucleotide + Ni(2+). Involved in the biosynthesis of a nickel-pincer cofactor ((SCS)Ni(II) pincer complex). Binds Ni(2+), and functions in nickel delivery to pyridinium-3,5-bisthiocarboxylic acid mononucleotide (P2TMN), to form the mature cofactor. Is thus probably required for the activation of nickel-pincer cofactor-dependent enzymes. In Staphylococcus saprophyticus subsp. saprophyticus (strain ATCC 15305 / DSM 20229 / NCIMB 8711 / NCTC 7292 / S-41), this protein is Pyridinium-3,5-bisthiocarboxylic acid mononucleotide nickel insertion protein.